The following is a 151-amino-acid chain: D-aminoacyl-tRNA deacylase (151 aa).

Residues 138–139 (GP) carry the Gly-cisPro motif, important for rejection of L-amino acids motif.

The protein belongs to the DTD family. Homodimer.

The protein localises to the cytoplasm. The catalysed reaction is glycyl-tRNA(Ala) + H2O = tRNA(Ala) + glycine + H(+). It carries out the reaction a D-aminoacyl-tRNA + H2O = a tRNA + a D-alpha-amino acid + H(+). Its function is as follows. An aminoacyl-tRNA editing enzyme that deacylates mischarged D-aminoacyl-tRNAs. Also deacylates mischarged glycyl-tRNA(Ala), protecting cells against glycine mischarging by AlaRS. Acts via tRNA-based rather than protein-based catalysis; rejects L-amino acids rather than detecting D-amino acids in the active site. By recycling D-aminoacyl-tRNA to D-amino acids and free tRNA molecules, this enzyme counteracts the toxicity associated with the formation of D-aminoacyl-tRNA entities in vivo and helps enforce protein L-homochirality. This Magnetococcus marinus (strain ATCC BAA-1437 / JCM 17883 / MC-1) protein is D-aminoacyl-tRNA deacylase.